Here is a 122-residue protein sequence, read N- to C-terminus: Small ribosomal subunit protein uS13 (122 aa).

Positions 95–122 are disordered; sequence GLPVRGQRTHTNARTRKGPAKPIAGKKK.

Belongs to the universal ribosomal protein uS13 family. As to quaternary structure, part of the 30S ribosomal subunit. Forms a loose heterodimer with protein S19. Forms two bridges to the 50S subunit in the 70S ribosome.

Functionally, located at the top of the head of the 30S subunit, it contacts several helices of the 16S rRNA. In the 70S ribosome it contacts the 23S rRNA (bridge B1a) and protein L5 of the 50S subunit (bridge B1b), connecting the 2 subunits; these bridges are implicated in subunit movement. Contacts the tRNAs in the A and P-sites. The polypeptide is Small ribosomal subunit protein uS13 (Caulobacter sp. (strain K31)).